Consider the following 194-residue polypeptide: HTH-type transcriptional regulator BetI (194 aa).

Positions P8 to L68 constitute an HTH tetR-type domain. Positions T31 to F50 form a DNA-binding region, H-T-H motif.

Its pathway is amine and polyamine biosynthesis; betaine biosynthesis via choline pathway [regulation]. Repressor involved in the biosynthesis of the osmoprotectant glycine betaine. It represses transcription of the choline transporter BetT and the genes of BetAB involved in the synthesis of glycine betaine. This chain is HTH-type transcriptional regulator BetI, found in Brucella anthropi (strain ATCC 49188 / DSM 6882 / CCUG 24695 / JCM 21032 / LMG 3331 / NBRC 15819 / NCTC 12168 / Alc 37) (Ochrobactrum anthropi).